Reading from the N-terminus, the 588-residue chain is Ribonuclease Y (588 aa).

Residues 7–27 (VLLVAVLLLTVVVVGAVLVGV) form a helical membrane-spanning segment. The KH domain occupies 278-359 (VVSVLHLPGD…HRIEEVHDLA (82 aa)). Residues 404–497 (VLKHLVESAH…TQASDACSGG (94 aa)) form the HD domain.

The protein belongs to the RNase Y family.

Its subcellular location is the cell membrane. Functionally, endoribonuclease that initiates mRNA decay. The chain is Ribonuclease Y from Salinispora tropica (strain ATCC BAA-916 / DSM 44818 / JCM 13857 / NBRC 105044 / CNB-440).